A 108-amino-acid polypeptide reads, in one-letter code: Cytochrome c oxidase subunit 1 (108 aa).

A helical transmembrane segment spans residues 10-30 (AFVAPVLGLLGFIPGGAGGIV). His49 serves as a coordination point for heme a3. The next 2 membrane-spanning stretches (helical) occupy residues 50–70 (FHLQ…YWLL) and 85–105 (LGLA…VGLH). A Fe(II)-heme a-binding site is contributed by His51.

The protein belongs to the heme-copper respiratory oxidase family. The cofactor is heme. Requires Cu cation as cofactor.

It is found in the cell membrane. It carries out the reaction 4 Fe(II)-[cytochrome c] + O2 + 8 H(+)(in) = 4 Fe(III)-[cytochrome c] + 2 H2O + 4 H(+)(out). Its pathway is energy metabolism; oxidative phosphorylation. In Thermus thermophilus, this protein is Cytochrome c oxidase subunit 1 (cbaA).